The chain runs to 843 residues: Protein translocase subunit SecA (843 aa).

ATP contacts are provided by residues glutamine 85, 103-107 (GEGKT), and aspartate 490. The segment at 799–834 (KNAVENRSDDSLPKQPVKAEPRVGRNDPCPCGSGKK) is disordered. Positions 802-823 (VENRSDDSLPKQPVKAEPRVGR) are enriched in basic and acidic residues. The Zn(2+) site is built by cysteine 827, cysteine 829, cysteine 838, and cysteine 839.

It belongs to the SecA family. Monomer and homodimer. Part of the essential Sec protein translocation apparatus which comprises SecA, SecYEG and auxiliary proteins SecDF. Other proteins may also be involved. It depends on Zn(2+) as a cofactor.

The protein localises to the cell membrane. Its subcellular location is the cytoplasm. It carries out the reaction ATP + H2O + cellular proteinSide 1 = ADP + phosphate + cellular proteinSide 2.. In terms of biological role, part of the Sec protein translocase complex. Interacts with the SecYEG preprotein conducting channel. Has a central role in coupling the hydrolysis of ATP to the transfer of proteins into and across the cell membrane, serving as an ATP-driven molecular motor driving the stepwise translocation of polypeptide chains across the membrane. The polypeptide is Protein translocase subunit SecA (Heliobacterium modesticaldum (strain ATCC 51547 / Ice1)).